The chain runs to 541 residues: Zinc finger CCHC domain-containing protein 7 (541 aa).

The tract at residues 111–144 is disordered; sequence AEEKTQSPATSHSNKVAQKCKRNNKKPKPEERPG. The span at 116–126 shows a compositional bias: polar residues; the sequence is QSPATSHSNKV. Glycyl lysine isopeptide (Lys-Gly) (interchain with G-Cter in SUMO2) cross-links involve residues Lys129, Lys136, Lys138, Lys234, and Lys249. 3 consecutive CCHC-type zinc fingers follow at residues 236-253, 258-275, and 299-316; these read VTCRNCDKRGHLSKNCPL, RACCLCSERGHLQYGCPA, and KRCDRCDMIGHHADACPE. Lys334 is covalently cross-linked (Glycyl lysine isopeptide (Lys-Gly) (interchain with G-Cter in SUMO2)). The CCHC-type 4 zinc finger occupies 343 to 360; it reads VYCYNCAQKGHYGHECTE. The interval 394-541 is disordered; the sequence is VKDLKKNGDF…KKKKPKPSGL (148 aa). Residues Lys408 and Lys431 each participate in a glycyl lysine isopeptide (Lys-Gly) (interchain with G-Cter in SUMO2) cross-link. Positions 418–434 are enriched in basic residues; the sequence is RRHHDMRKSRSPRKYRR. Residues 435–452 show a composition bias toward basic and acidic residues; sequence WPRENKETQKEKTRSREG. Lys473 is covalently cross-linked (Glycyl lysine isopeptide (Lys-Gly) (interchain with G-Cter in SUMO2)). The segment covering 474 to 486 has biased composition (polar residues); it reads PNASGCANNQKPS. Phosphoserine is present on Ser477. Glycyl lysine isopeptide (Lys-Gly) (interchain with G-Cter in SUMO2) cross-links involve residues Lys484 and Lys487. Basic residues predominate over residues 487 to 497; the sequence is KSLHHASHYHR. Composition is skewed to basic and acidic residues over residues 498 to 509 and 517 to 527; these read LREERLLRESKR and STEDGSHDDLF. Lys530 is covalently cross-linked (Glycyl lysine isopeptide (Lys-Gly) (interchain with G-Cter in SUMO2)). Residues 530–541 are compositionally biased toward basic residues; the sequence is KQKKKKPKPSGL.

In terms of assembly, component of a nucleolar TRAMP-like complex, an ATP-dependent exosome regulatory complex consisting of a helicase (MTREX), an oligadenylate polymerase (TENT4B or TENT4A), and a substrate specific RNA-binding factor (ZCCHC7 or ZCCHC8). Several TRAMP-like complexes exist with specific compositions and are associated with nuclear, or nucleolar RNA exosomes.

The protein resides in the nucleus. It is found in the nucleolus. In Mus musculus (Mouse), this protein is Zinc finger CCHC domain-containing protein 7 (Zcchc7).